A 100-amino-acid polypeptide reads, in one-letter code: Urease subunit gamma (100 aa).

It belongs to the urease gamma subunit family. Heterotrimer of UreA (gamma), UreB (beta) and UreC (alpha) subunits. Three heterotrimers associate to form the active enzyme.

It localises to the cytoplasm. It catalyses the reaction urea + 2 H2O + H(+) = hydrogencarbonate + 2 NH4(+). The protein operates within nitrogen metabolism; urea degradation; CO(2) and NH(3) from urea (urease route): step 1/1. This chain is Urease subunit gamma, found in Bacillus cereus (strain ATCC 10987 / NRS 248).